The following is a 708-amino-acid chain: Alpha-galactosidase (708 aa).

The Nucleophile role is filled by Asp-441. Catalysis depends on Asp-505, which acts as the Proton donor.

The protein belongs to the glycosyl hydrolase 36 family. In terms of assembly, homotetramer.

It carries out the reaction Hydrolysis of terminal, non-reducing alpha-D-galactose residues in alpha-D-galactosides, including galactose oligosaccharides, galactomannans and galactolipids.. The sequence is that of Alpha-galactosidase (rafA) from Escherichia coli.